The chain runs to 34 residues: Trypsin inhibitor 2 (34 aa).

The cyclopeptide (Ser-Gly) cross-link spans 1–34 (SGSDGGVCPKILKKCRRDSDCPGACICRGNGYCG). The segment at residues 4–5 (DG) is a cross-link ((2-aminosuccinimidyl)acetic acid (Asp-Gly); alternate). The isoaspartyl glycine isopeptide (Asp-Gly); alternate cross-link spans 4–5 (DG). 3 disulfides stabilise this stretch: cysteine 8/cysteine 25, cysteine 15/cysteine 27, and cysteine 21/cysteine 33.

In terms of processing, a cyclic succinimide probably forms by loss of water between Asp-4 and Gly-5, that can then rehydrate to either the original peptide bond or to a beta-aspartyl isopeptide bond. Three isoforms of MCoTI-II are detected, two with the parent molecular weight, corresponding to the unmodified and proposed isopeptide forms, and one with a molecular weight 18 Da lower, corresponding to a succinimide cross-linked form. Post-translationally, this is a cyclic peptide.

It is found in the secreted. Inhibits trypsin; probably participates in a plant defense mechanism. In Momordica cochinchinensis (Spiny bitter cucumber), this protein is Trypsin inhibitor 2.